Here is a 398-residue protein sequence, read N- to C-terminus: tRNA pseudouridine synthase D (398 aa).

The active-site Nucleophile is the Asp76. Positions 151 to 360 (GVPNFFGEQR…MPGERRPLRI (210 aa)) constitute a TRUD domain.

This sequence belongs to the pseudouridine synthase TruD family.

It catalyses the reaction uridine(13) in tRNA = pseudouridine(13) in tRNA. Functionally, responsible for synthesis of pseudouridine from uracil-13 in transfer RNAs. This chain is tRNA pseudouridine synthase D, found in Syntrophotalea carbinolica (strain DSM 2380 / NBRC 103641 / GraBd1) (Pelobacter carbinolicus).